The chain runs to 134 residues: Small ribosomal subunit protein uS9 (134 aa).

Positions 97-134 (ENRQDLKSCGFLTRDPRKKERKKYGHKKARKSFQFSKR) are disordered. The segment covering 115 to 134 (KERKKYGHKKARKSFQFSKR) has biased composition (basic residues).

This sequence belongs to the universal ribosomal protein uS9 family.

This is Small ribosomal subunit protein uS9 (rpsI) from Chlamydia pneumoniae (Chlamydophila pneumoniae).